A 328-amino-acid chain; its full sequence is Stress response kinase A (328 aa).

D201 (proton acceptor) is an active-site residue. N206 and D217 together coordinate Mg(2+). D217 is an active-site residue.

The protein belongs to the SrkA/RdoA protein kinase family. Monomer. The cofactor is Mg(2+).

It localises to the cytoplasm. It carries out the reaction L-seryl-[protein] + ATP = O-phospho-L-seryl-[protein] + ADP + H(+). It catalyses the reaction L-threonyl-[protein] + ATP = O-phospho-L-threonyl-[protein] + ADP + H(+). Its function is as follows. A protein kinase that phosphorylates Ser and Thr residues. Probably acts to suppress the effects of stress linked to accumulation of reactive oxygen species. Probably involved in the extracytoplasmic stress response. The polypeptide is Stress response kinase A (Salmonella choleraesuis (strain SC-B67)).